The sequence spans 2171 residues: MKQLFNIIHCDHLNGHVRSIYDNLNTDICGIDRVRRVFTFFSIFLLLFGLMFVCSRYKKCHKTLLTFHNGRAAISLLLLALNSFDLARIFLPHQNVRNLNRLFQSSPRDLNYLVVIGSGELWNALFSTLLTLMLMLYHRMVERKKATVFLYASTAVEALTFALLSNELFELVRYEDFLELQTCLVAMSAMCMVSLAMLDGLTVYKECYHDDYLDDYGKIGYKHSMATFYSKSCFWWLTPLLWLGYKEPLELEDLGQMKLEDSARSHYDHFLYIYTEKKKKSNSSPSLWYCYIKNSWQMFALGGILKLAGDLFALIGPLAIQKIVEYIEQLYAQASEPPAKSPGNEVANVLLSTSRILGTEFDEVFGTNIDKGLIYRKSLLLNADGGCDSSDSAGQVQSTSSTSDEKQKNDDSMATPEHVDNPSEPNISHDIGSITNHMTEDTRNIMEFFLIIHYAWAIPFKIAVVIYLLYMNLGISAVIGSIACIVIMTPLQFFIGNAMSKNAEVIAGYTDERLKRIHDTLVGIKVIKLNAWDEVFLKKIQEARRKELKYLNKDATFWTLMAVLTHIATVLITFVTLGVYVWLHRDQEFDLNASRLFSSLALFQQLTVPLLIFPITVPIIIAARVSTRRLERFLKSSEIQKQFEGIRNMARILSKSDASLDMYETQEKSNMTMRTAQAENRLNEKRLAQKSQTPELATNSTPLLQNAEESAEDISPSTVQELGHNKLVQQRRELLRNTPYVAIRPPKMRGSVMERPVEFSVIRARNTDSWRRDSLLLKMPDDIAVSINDGLFTWQPQSQMPVVQLHVPGIIVPKGKLTIVVGKNGSGKTSLLSALLMEMPLLAGNMFWHKTCTISYVSQQPWLLNDTIRENILFGESFRPKRYDFVLEACALKPDIELMPRGDLSIIGERGINISGGQRQRIAIARAIYSSANVVIMDDPLASLDNEVGEHIFQHCIREMLQKSNRTFILVTQQLHRIKEAEYLIAIKDGRVEACGSYADIELMQPRITAEWNAIIAMAKAKNDNPSQNPGEKTAGERWKLLKNVSKLGLQRSISVTMDANVACHADAIDGSGCISVANMQSNVVEEDDQVSVSYPIGNASCGGFNLQRKRSSIYGSRHLMYDVPLPIDECQGDDVIMRPRRRHTLGRRGSRNTNSSHRLSGLSTLTATSESSSISGDVLSRSVLATSCSSYAESSVDGGDLATAAPEPRVQSWQPPQHVTHHQPLSRNASSPPAMEVANPDVKKSEEARRSNTSSESPLDDHVRGSFQQFLRRMSMRRSNKPKNHHHPLSATNSILSISEESPPVVHFPASILATDGNKNETQSEEKPKKCVNIDSKETTINCDDNCYSASDKELRANVTSSPADQEQHNERHVLAEVAGESGRESMPLARLAIDTERKYGKISDDIYLMYIRAAGLPIITIFFITALIWQCLRVYTDIWLQQWSNVHGRVASKGHVVLHPSEQDHEVTYYFRMYAAISCVCIIMALVSTPAGQYAGCNARRNLHDKLLQTILHKTLHFFQVTPLGRIVNRFSNDMAVIDKKIAATGQRLLQFTLLCLSAILINVTITPWILVLTLPICGAYYLIQKFYRCSARELQRIENATNSPVISHLSETIQGVTTIRAFNQQTRFTEILFKRLEANTIAYALLNTSHRWLGVSLDYLGGCIVFVATVTALTAASVSCRRHYEATTSPSASASPSPFETYAVTKSPSELRPSPSLVGLAINYTLLVPIYLNWVVKLLADMEMYAGSVERIAHYAQGQDADADADADADADVDADLDHEPSSNEDVSAEVDRSSQSDAGDKVYPGATTAAGDVDEDGDQQRIGGARGGGGDCGYRQGHENGAEANADKLNAGNVTGDGNHLNFHHPPATAGDKVEQATTKTSVIKDKQLPPQQDDKDKKVVLPNEPARKLERYQSVPISWPQRGDIHFDNVSLRYEGQKQNVISNLTLKIPAGQRIGICGRTGSGKSSLGLSLFGVLQTTRGHIYIDDVDIQRIRPDELRTRLSIIPQDVHLFNATIRENLDPHGYFQDLQLWNCLELAQLKEFVNGHLPLGLDTVICDGGLNLSAGHRQLLCLARAILRGSVCLVLDEATSVLDSSTESALLKAADLAFRGRTIITIAHRLTTILDYDRLIVLDQGRIVEDGNPRELQQLEGSVFRGLLEKGASKW.

Residues 1–36 (MKQLFNIIHCDHLNGHVRSIYDNLNTDICGIDRVRR) are Extracellular-facing. Residues 37-57 (VFTFFSIFLLLFGLMFVCSRY) form a helical membrane-spanning segment. Residues 58–71 (KKCHKTLLTFHNGR) lie on the Cytoplasmic side of the membrane. The helical transmembrane segment at 72–92 (AAISLLLLALNSFDLARIFLP) threads the bilayer. At 93–112 (HQNVRNLNRLFQSSPRDLNY) the chain is on the extracellular side. The helical transmembrane segment at 113 to 133 (LVVIGSGELWNALFSTLLTLM) threads the bilayer. Residues 134–145 (LMLYHRMVERKK) are Cytoplasmic-facing. A helical membrane pass occupies residues 146 to 166 (ATVFLYASTAVEALTFALLSN). Over 167–182 (ELFELVRYEDFLELQT) the chain is Extracellular. Residues 183–203 (CLVAMSAMCMVSLAMLDGLTV) form a helical membrane-spanning segment. Residues 204 to 224 (YKECYHDDYLDDYGKIGYKHS) lie on the Cytoplasmic side of the membrane. The helical transmembrane segment at 225–245 (MATFYSKSCFWWLTPLLWLGY) threads the bilayer. Residues 246 to 299 (KEPLELEDLGQMKLEDSARSHYDHFLYIYTEKKKKSNSSPSLWYCYIKNSWQMF) lie on the Extracellular side of the membrane. A helical membrane pass occupies residues 300–320 (ALGGILKLAGDLFALIGPLAI). Residues 321–447 (QKIVEYIEQL…MTEDTRNIME (127 aa)) lie on the Cytoplasmic side of the membrane. Residues 344-622 (NEVANVLLST…FPITVPIIIA (279 aa)) form the ABC transmembrane type-1 1 domain. Residues 388–434 (DSSDSAGQVQSTSSTSDEKQKNDDSMATPEHVDNPSEPNISHDIGSI) are disordered. The segment covering 389–402 (SSDSAGQVQSTSST) has biased composition (polar residues). Over residues 403–421 (SDEKQKNDDSMATPEHVDN) the composition is skewed to basic and acidic residues. A helical transmembrane segment spans residues 448-468 (FFLIIHYAWAIPFKIAVVIYL). The Extracellular portion of the chain corresponds to 469-474 (LYMNLG). The helical transmembrane segment at 475–495 (ISAVIGSIACIVIMTPLQFFI) threads the bilayer. The Cytoplasmic segment spans residues 496–562 (GNAMSKNAEV…KDATFWTLMA (67 aa)). The chain crosses the membrane as a helical span at residues 563-583 (VLTHIATVLITFVTLGVYVWL). Over 584 to 600 (HRDQEFDLNASRLFSSL) the chain is Extracellular. Residues 601 to 621 (ALFQQLTVPLLIFPITVPIII) traverse the membrane as a helical segment. The Cytoplasmic segment spans residues 622–1409 (AARVSTRRLE…KYGKISDDIY (788 aa)). One can recognise an ABC transporter 1 domain in the interval 785-1014 (VSINDGLFTW…QPRITAEWNA (230 aa)). 822–829 (GKNGSGKT) is a binding site for ATP. Positions 1141–1151 (RRRHTLGRRGS) are enriched in basic residues. 2 disordered regions span residues 1141–1177 (RRRHTLGRRGSRNTNSSHRLSGLSTLTATSESSSISG) and 1209–1265 (PRVQ…DHVR). Residues 1160 to 1176 (LSGLSTLTATSESSSIS) are compositionally biased toward low complexity. Over residues 1212-1232 (QSWQPPQHVTHHQPLSRNASS) the composition is skewed to polar residues. The segment covering 1242–1251 (DVKKSEEARR) has biased composition (basic and acidic residues). Residues 1410-1430 (LMYIRAAGLPIITIFFITALI) form a helical membrane-spanning segment. The ABC transmembrane type-1 2 domain occupies 1421–1715 (ITIFFITALI…AVTKSPSELR (295 aa)). Topologically, residues 1431-1468 (WQCLRVYTDIWLQQWSNVHGRVASKGHVVLHPSEQDHE) are extracellular. Residues 1469–1489 (VTYYFRMYAAISCVCIIMALV) form a helical membrane-spanning segment. Topologically, residues 1490–1558 (STPAGQYAGC…QRLLQFTLLC (69 aa)) are cytoplasmic. Residues 1559-1579 (LSAILINVTITPWILVLTLPI) form a helical membrane-spanning segment. Residues 1580-1655 (CGAYYLIQKF…YALLNTSHRW (76 aa)) lie on the Extracellular side of the membrane. A helical transmembrane segment spans residues 1656-1676 (LGVSLDYLGGCIVFVATVTAL). The Cytoplasmic segment spans residues 1677–1718 (TAASVSCRRHYEATTSPSASASPSPFETYAVTKSPSELRPSP). Residues 1719 to 1739 (SLVGLAINYTLLVPIYLNWVV) form a helical membrane-spanning segment. Residues 1740–2171 (KLLADMEMYA…GLLEKGASKW (432 aa)) lie on the Extracellular side of the membrane. Residues 1766–1778 (ADADADADADVDA) show a composition bias toward acidic residues. Disordered regions lie at residues 1766 to 1844 (ADAD…GHEN) and 1866 to 1902 (NFHHPPATAGDKVEQATTKTSVIKDKQLPPQQDDKDK). 2 stretches are compositionally biased toward basic and acidic residues: residues 1793-1804 (EVDRSSQSDAGD) and 1887-1902 (VIKDKQLPPQQDDKDK). In terms of domain architecture, ABC transporter 2 spans 1930–2165 (IHFDNVSLRY…EGSVFRGLLE (236 aa)). 1964–1971 (GRTGSGKS) lines the ATP pocket.

The protein belongs to the ABC transporter superfamily. ABCC family. Conjugate transporter (TC 3.A.1.208) subfamily. In terms of tissue distribution, highly expressed in adult heart. Detected at lower levels in head and abdomen.

The protein resides in the membrane. Its function is as follows. May function as regulatory subunit of ATP-sensitive potassium channels (KATP) and form KATP channels with a member of the ATP-sensitive inward rectifier potassium channel family. May also have channel activity by itself (in vitro). May protect the heart during hypoxia. May protect against heart failure under conditions of tachycardic stress. The polypeptide is ATP-binding cassette sub-family C member Sur (Sur) (Drosophila melanogaster (Fruit fly)).